A 202-amino-acid polypeptide reads, in one-letter code: 7-methyl-GTP pyrophosphatase (202 aa).

Asp70 functions as the Proton acceptor in the catalytic mechanism.

This sequence belongs to the Maf family. YceF subfamily. It depends on a divalent metal cation as a cofactor.

The protein localises to the cytoplasm. The enzyme catalyses N(7)-methyl-GTP + H2O = N(7)-methyl-GMP + diphosphate + H(+). Functionally, nucleoside triphosphate pyrophosphatase that hydrolyzes 7-methyl-GTP (m(7)GTP). May have a dual role in cell division arrest and in preventing the incorporation of modified nucleotides into cellular nucleic acids. This chain is 7-methyl-GTP pyrophosphatase, found in Pseudoalteromonas translucida (strain TAC 125).